Here is a 280-residue protein sequence, read N- to C-terminus: Dolichyl-diphosphooligosaccharide--protein glycosyltransferase subunit 2 (280 aa).

The first 16 residues, 1-16 (MKLLLVLLTIASVALA), serve as a signal peptide directing secretion. The Lumenal portion of the chain corresponds to 17–187 (AVDDVAVNNF…FRQPEKRPSA (171 aa)). Residues 188–208 (LISDLFTIICLSPLLILVVLW) form a helical membrane-spanning segment. Topologically, residues 209–222 (SQVGINFQNAPASP) are cytoplasmic. The chain crosses the membrane as a helical span at residues 223–243 (WVPIFHVGLIGIFGIYFMFWV). Q244 is a topological domain (lumenal). The helical transmembrane segment at 245–265 (FDMFVTLKYLAVLGFLTFVAG) threads the bilayer. Residues 266–280 (NRVLRAISESKQKSE) are Cytoplasmic-facing.

This sequence belongs to the SWP1 family. Component of the oligosaccharyltransferase (OST) complex.

The protein resides in the endoplasmic reticulum membrane. Its pathway is protein modification; protein glycosylation. Its function is as follows. Subunit of the oligosaccharyl transferase (OST) complex that catalyzes the initial transfer of a defined glycan (Glc(3)Man(9)GlcNAc(2) in eukaryotes) from the lipid carrier dolichol-pyrophosphate to an asparagine residue within an Asn-X-Ser/Thr consensus motif in nascent polypeptide chains, the first step in protein N-glycosylation. N-glycosylation occurs cotranslationally and the complex associates with the Sec61 complex at the channel-forming translocon complex that mediates protein translocation across the endoplasmic reticulum (ER). All subunits are required for a maximal enzyme activity. The protein is Dolichyl-diphosphooligosaccharide--protein glycosyltransferase subunit 2 of Caenorhabditis elegans.